A 736-amino-acid polypeptide reads, in one-letter code: NADPH--cytochrome P450 reductase (736 aa).

A topological domain (lumenal) is located at residue Met1. The chain crosses the membrane as a helical span at residues 2-24; sequence AVSSSSDVIVLSVGIILAALYLF. The Cytoplasmic segment spans residues 25-736; sequence REQIFSAAKP…RNRLLLDVWS (712 aa). A Flavodoxin-like domain is found at 66-216; that stretch reads IVIFYGSQTG…DYLEWKDGMW (151 aa). FMN-binding positions include 72-77, 123-126, 165-174, and Asp200; these read SQTGTA, ATYG, and LGNKTYEHYN. Positions 269-546 constitute an FAD-binding FR-type domain; sequence KNPYPAPIIA…EGPRGAYKQG (278 aa). Arg289 serves as a coordination point for NADP(+). FAD contacts are provided by residues 456-459, 474-476, Tyr480, and 495-498; these read RYYS, TVV, and GVGS. NADP(+) is bound by residues Thr577, 648–649, and 659–663; these read SR and KIYVQ. An FAD-binding site is contributed by Trp735.

The protein belongs to the NADPH--cytochrome P450 reductase family. This sequence in the N-terminal section; belongs to the flavodoxin family. It in the C-terminal section; belongs to the flavoprotein pyridine nucleotide cytochrome reductase family. FAD serves as cofactor. The cofactor is FMN.

The protein localises to the endoplasmic reticulum membrane. It localises to the mitochondrion outer membrane. Its subcellular location is the cell membrane. It catalyses the reaction 2 oxidized [cytochrome P450] + NADPH = 2 reduced [cytochrome P450] + NADP(+) + H(+). Functionally, this enzyme is required for electron transfer from NADP to cytochrome P450 in microsomes. It can also provide electron transfer to heme oxygenase and cytochrome B5. Involved in ergosterol biosynthesis. This is NADPH--cytochrome P450 reductase (CPR) from Phanerodontia chrysosporium (White-rot fungus).